The following is a 355-amino-acid chain: UDP-N-acetylglucosamine--N-acetylmuramyl-(pentapeptide) pyrophosphoryl-undecaprenol N-acetylglucosamine transferase (355 aa).

Residues 15 to 17 (TGG), Asn-127, Arg-163, Ser-191, Ile-244, 263 to 268 (ALTVSE), and Gln-288 each bind UDP-N-acetyl-alpha-D-glucosamine.

Belongs to the glycosyltransferase 28 family. MurG subfamily.

Its subcellular location is the cell inner membrane. The enzyme catalyses di-trans,octa-cis-undecaprenyl diphospho-N-acetyl-alpha-D-muramoyl-L-alanyl-D-glutamyl-meso-2,6-diaminopimeloyl-D-alanyl-D-alanine + UDP-N-acetyl-alpha-D-glucosamine = di-trans,octa-cis-undecaprenyl diphospho-[N-acetyl-alpha-D-glucosaminyl-(1-&gt;4)]-N-acetyl-alpha-D-muramoyl-L-alanyl-D-glutamyl-meso-2,6-diaminopimeloyl-D-alanyl-D-alanine + UDP + H(+). The protein operates within cell wall biogenesis; peptidoglycan biosynthesis. Functionally, cell wall formation. Catalyzes the transfer of a GlcNAc subunit on undecaprenyl-pyrophosphoryl-MurNAc-pentapeptide (lipid intermediate I) to form undecaprenyl-pyrophosphoryl-MurNAc-(pentapeptide)GlcNAc (lipid intermediate II). This Sodalis glossinidius (strain morsitans) protein is UDP-N-acetylglucosamine--N-acetylmuramyl-(pentapeptide) pyrophosphoryl-undecaprenol N-acetylglucosamine transferase.